A 374-amino-acid chain; its full sequence is Proteasomal ubiquitin receptor ADRM1 homolog (374 aa).

One can recognise a Pru domain in the interval Ser-13 to Pro-131. Disordered stretches follow at residues Asp-126–Pro-166, Ser-187–Ser-223, and Ala-334–Asp-374. Polar residues-rich tracts occupy residues Ser-141 to Met-163 and Pro-209 to Ser-223. The 108-residue stretch at Ser-239–Ala-346 folds into the DEUBAD domain. Positions Asp-354–Asn-368 are enriched in basic and acidic residues.

The protein belongs to the ADRM1 family. In terms of assembly, component of the 19S proteasome regulatory particle complex. The 26S proteasome consists of a 20S core particle (CP) and two 19S regulatory subunits (RP). Interacts with deubiquitinase ubh-4.

The protein resides in the cytoplasm. It localises to the nucleus. May function as a proteasomal ubiquitin receptor. May promote the deubiquitinating activity associated with the 26S proteasome. The polypeptide is Proteasomal ubiquitin receptor ADRM1 homolog (Caenorhabditis elegans).